The following is a 748-amino-acid chain: Adenosylcobalamin-dependent ribonucleoside-triphosphate reductase (748 aa).

The cysteines at positions 123 and 426 are disulfide-linked. Positions 151–162 (SMPYSFMFDELM) are effector region-1. The segment at 172-320 (TKDNIAKLPP…IGNLIGKTVV (149 aa)) is effector region-2. Active-site residues include Cys-415 and Glu-417. The adenosylcobalamin-binding-1 stretch occupies residues 572-633 (FHYAGYLIQR…DPAFASAGTV (62 aa)). The tract at residues 692 to 733 (FKQAPKEPIDVKTYKQKCAAIHGSVAAVFAVQNADHDQKDLE) is adenosylcobalamin-binding-2.

It belongs to the class II ribonucleoside-triphosphate reductase family. As to quaternary structure, monomer. It depends on adenosylcob(III)alamin as a cofactor.

The catalysed reaction is a 2'-deoxyribonucleoside 5'-triphosphate + [thioredoxin]-disulfide + H2O = a ribonucleoside 5'-triphosphate + [thioredoxin]-dithiol. Its activity is regulated as follows. Allosterically regulated by ATP and dNTP. The sequence is that of Adenosylcobalamin-dependent ribonucleoside-triphosphate reductase (rtpR) from Lacticaseibacillus paracasei (strain ATCC 334 / BCRC 17002 / CCUG 31169 / CIP 107868 / KCTC 3260 / NRRL B-441) (Lactobacillus paracasei).